We begin with the raw amino-acid sequence, 530 residues long: Vesicular acetylcholine transporter (530 aa).

Residues 1-33 (MEPTAPTGQARAAATKLSEAVGAALQEPQRQRR) are Cytoplasmic-facing. The helical transmembrane segment at 34–54 (LVLVIVCVALLLDNMLYMVIV) threads the bilayer. The Lumenal, vesicle segment spans residues 55-125 (PIVPDYIAHM…PTESEDVKIG (71 aa)). N89 and N96 each carry an N-linked (GlcNAc...) asparagine glycan. The chain crosses the membrane as a helical span at residues 126–146 (VLFASKAILQLLVNPLSGPFI). Residues 147-152 (DRMSYD) are Cytoplasmic-facing. The chain crosses the membrane as a helical span at residues 153–173 (VPLLIGLGVMFASTVMFAFAE). Residues 174-182 (DYATFFAAR) are Lumenal, vesicle-facing. The helical transmembrane segment at 183–203 (SLQGLGSAFADTSGIAMIADK) threads the bilayer. Topologically, residues 204–213 (YPEEPERSRA) are cytoplasmic. The chain crosses the membrane as a helical span at residues 214–234 (LGVALAFISFGSLVAPPFGGI). At 235–242 (LYEFAGKR) the chain is on the lumenal, vesicle side. The chain crosses the membrane as a helical span at residues 243-263 (VPFLVLAAVSLFDALLLLAVA). The Cytoplasmic segment spans residues 264 to 288 (KPFSAAARARANLPVGTPIHRLMLD). A helical membrane pass occupies residues 289 to 309 (PYIAVVAGALTTCNIPLAFLE). Residues 310-325 (PTIATWMKHTMAASEW) lie on the Lumenal, vesicle side of the membrane. A helical membrane pass occupies residues 326-346 (EMGMVWLPAFVPHVLGVYLTV). Topologically, residues 347-356 (RLAARYPHLQ) are cytoplasmic. The chain crosses the membrane as a helical span at residues 357-377 (WLYGALGLAVIGVSSCVVPAC). Topologically, residues 378–388 (RSFAPLVVSLC) are lumenal, vesicle. Residues 389–409 (GLCFGIALVDTALLPTLAFLV) form a helical membrane-spanning segment. The Cytoplasmic portion of the chain corresponds to 410–422 (DVRHVSVYGSVYA). The chain crosses the membrane as a helical span at residues 423-443 (IADISYSVAYALGPIVAGHIV). Topologically, residues 444–447 (HSLG) are lumenal, vesicle. Residues 448 to 468 (FEQLSLGMGLANLLYAPVLLL) form a helical membrane-spanning segment. Residues 469 to 530 (LRNVGLLTRS…EDDYNYYSRS (62 aa)) are Cytoplasmic-facing. The mediates interaction with SEC14L1 stretch occupies residues 471–530 (NVGLLTRSRSERDVLLDEPPQGLYDAVRLREVQGKDGGEPCSPPGPFDGCEDDYNYYSRS). The interval 504-530 (GKDGGEPCSPPGPFDGCEDDYNYYSRS) is disordered.

The protein belongs to the major facilitator superfamily. Vesicular transporter family. In terms of assembly, interacts with SEC14L1. In terms of tissue distribution, expressed in the spinal cord, brain (excluding the cerebellum), brain stem and cholinergic tissues. Not expressed in peripheral tissues such as liver and kidney.

The protein resides in the cytoplasmic vesicle. It is found in the secretory vesicle. Its subcellular location is the synaptic vesicle membrane. The catalysed reaction is acetylcholine(out) + 2 H(+)(in) = acetylcholine(in) + 2 H(+)(out). It catalyses the reaction choline(in) + 2 H(+)(out) = choline(out) + 2 H(+)(in). It carries out the reaction serotonin(in) + 2 H(+)(out) = serotonin(out) + 2 H(+)(in). Electrogenic antiporter that exchanges one cholinergic neurotransmitter, acetylcholine or choline, with two intravesicular protons across the membrane of synaptic vesicles. Uses the electrochemical proton gradient established by the V-type proton-pump ATPase to store neurotransmitters inside the vesicles prior to their release via exocytosis. Determines cholinergic vesicular quantal size at presynaptic nerve terminals in developing neuro-muscular junctions with an impact on motor neuron differentiation and innervation pattern. Part of forebrain cholinergic system, regulates hippocampal synapse transmissions that underlie spatial memory formation. Can transport serotonin. This Mus musculus (Mouse) protein is Vesicular acetylcholine transporter (Slc18a3).